We begin with the raw amino-acid sequence, 142 residues long: Hemoglobin subunit alpha (142 aa).

The Globin domain maps to 2–142 (VLSSQNKKAI…VAYELSSCYR (141 aa)). His-60 contributes to the O2 binding site. Position 89 (His-89) interacts with heme b.

It belongs to the globin family. As to quaternary structure, heterotetramer of two alpha chains and two beta chains. As to expression, red blood cells.

Involved in oxygen transport from gills to the various peripheral tissues. This Hemitrygon akajei (Red stingray) protein is Hemoglobin subunit alpha (hba).